A 527-amino-acid chain; its full sequence is N-acetylglutamate synthase, mitochondrial (527 aa).

The N-terminal 39 residues, 1-39, are a transit peptide targeting the mitochondrion; the sequence is MAKVNSGSSGCRAMVMAGQFWTKPFALSSQRSGPHRRSA. The tract at residues 28-65 is disordered; that stretch reads SSQRSGPHRRSAAEVNRRMSSSRTAGHGSKTPLWSQQE. The may stabilize the oligomeric structure stretch occupies residues 40–83; that stretch reads AEVNRRMSSSRTAGHGSKTPLWSQQESYNHSSLGERSAWSNRTL. The segment at 40-361 is amino-acid kinase domain (AAK); it reads AEVNRRMSSS…SGTLFKNGDP (322 aa). The N-acetyltransferase domain maps to 360 to 511; that stretch reads DPIRRYSSLE…FAKSHPDSFC (152 aa). Residues lysine 386, lysine 429, and 459–464 contribute to the substrate site; that span reads RSRTTN.

The protein belongs to the acetyltransferase family. Homodimer. Homotetramer.

It localises to the mitochondrion matrix. It carries out the reaction L-glutamate + acetyl-CoA = N-acetyl-L-glutamate + CoA + H(+). Inhibited by L-arginine. Functionally, plays a role in the regulation of ureagenesis by producing the essential cofactor N-acetylglutamate (NAG), thus modulating carbamoylphosphate synthase I (cps1) activity. This is N-acetylglutamate synthase, mitochondrial from Danio rerio (Zebrafish).